Reading from the N-terminus, the 71-residue chain is Glucose-repressible gene protein (71 aa).

The disordered stretch occupies residues 19–71 (TATASKEANKDVAKDSNQGVGTRLNAAGDAISDKVSENKHDAKAEAHKQGATH). Over residues 49-71 (ISDKVSENKHDAKAEAHKQGATH) the composition is skewed to basic and acidic residues.

This Neurospora crassa (strain ATCC 24698 / 74-OR23-1A / CBS 708.71 / DSM 1257 / FGSC 987) protein is Glucose-repressible gene protein (grg-1).